The following is a 120-amino-acid chain: Large ribosomal subunit protein eL34z (120 aa).

The tract at residues valine 31–isoleucine 51 is disordered.

Belongs to the eukaryotic ribosomal protein eL34 family.

This is Large ribosomal subunit protein eL34z (RPL34A) from Arabidopsis thaliana (Mouse-ear cress).